Consider the following 479-residue polypeptide: MESYDKVGSNKVPCLLILTCIIMSSFVNNNIVQAKVSWSLKAAEEAEAVANINCSGHGRAFLDGILSDGSPKCECNTCYTGADCSEKITGCSADVASGDGLFLEEYWQQHKENSAVLVSGWHRMSYFFNPVSNFISFELEKTIKELHEIVGNAAAKDRYIVFGVGVTQLIHGLVISLSPNMTATPCAPQSKVVAHAPYYPVFREQTKYFDKKGYEWKGNAADYVNTSTPEQFIEMVTSPNNPEGLLRHEVIKGCKSIYYMVYYWPHYTPIKYKADEDIMLFTMSKYTGHSGSRFGWALIKDETVYNKLLNYMTKNTEGTSRETQLRSLKILKEVIAMVKTQNGTMRDLNTFGFQKLRERWVNITALLDKSDRFSYQKLPQSEYCNYFRRMRPPSPSYAWVKCEWEEDKDCYQTFQNGRINTQSGEGFEAGSRYVRLSLIKTKDDFDQLMYYLKIMVEAKRKTPLIKQLSNDQISRRPFI.

Positions 1–25 (MESYDKVGSNKVPCLLILTCIIMSS) are cleaved as a signal peptide. Residues 26 to 34 (FVNNNIVQA) constitute a propeptide that is removed on maturation. Residues 47-93 (EAVANINCSGHGRAFLDGILSDGSPKCECNTCYTGADCSEKITGCSA) form the EGF-like; atypical domain. A glycan (N-linked (GlcNAc...) asparagine) is linked at Asn53. Intrachain disulfides connect Cys54–Cys73, Cys75–Cys84, and Cys78–Cys91. Chloride is bound at residue 126–134 (YFFNPVSNF). N-linked (GlcNAc...) asparagine glycans are attached at residues Asn180 and Asn225. Residue Lys285 is modified to N6-(pyridoxal phosphate)lysine. N-linked (GlcNAc...) asparagine glycans are attached at residues Asn342 and Asn362. Cysteines 402 and 410 form a disulfide.

The protein belongs to the alliinase family. In terms of assembly, homodimer. The cofactor is pyridoxal 5'-phosphate.

It is found in the vacuole. It carries out the reaction an S-alkyl-L-cysteine S-oxide = an S-alkyl sulfenate + 2-aminoprop-2-enoate. This is Alliin lyase from Allium cepa (Onion).